A 469-amino-acid polypeptide reads, in one-letter code: 3-isopropylmalate dehydratase large subunit (469 aa).

[4Fe-4S] cluster contacts are provided by C350, C410, and C413.

Belongs to the aconitase/IPM isomerase family. LeuC type 1 subfamily. Heterodimer of LeuC and LeuD. [4Fe-4S] cluster is required as a cofactor.

It carries out the reaction (2R,3S)-3-isopropylmalate = (2S)-2-isopropylmalate. The protein operates within amino-acid biosynthesis; L-leucine biosynthesis; L-leucine from 3-methyl-2-oxobutanoate: step 2/4. In terms of biological role, catalyzes the isomerization between 2-isopropylmalate and 3-isopropylmalate, via the formation of 2-isopropylmaleate. This is 3-isopropylmalate dehydratase large subunit from Sinorhizobium fredii (strain NBRC 101917 / NGR234).